Consider the following 103-residue polypeptide: Large ribosomal subunit protein bL21 (103 aa).

Belongs to the bacterial ribosomal protein bL21 family. Part of the 50S ribosomal subunit. Contacts protein L20.

In terms of biological role, this protein binds to 23S rRNA in the presence of protein L20. This chain is Large ribosomal subunit protein bL21, found in Psychromonas ingrahamii (strain DSM 17664 / CCUG 51855 / 37).